Reading from the N-terminus, the 90-residue chain is Glycine and tyrosine-rich protein (90 aa).

Positions 1–21 (MRRSVLVVFLVLAVTNVAVEA) are cleaved as a signal peptide.

Prismatic layer of shell (at protein level).

The protein localises to the secreted. The polypeptide is Glycine and tyrosine-rich protein (Pinctada maxima (Silver-lipped pearl oyster)).